The chain runs to 267 residues: Glutamate 5-kinase (267 aa).

Position 17 (lysine 17) interacts with ATP. Substrate is bound by residues serine 57, aspartate 144, and asparagine 156. ATP-binding positions include 176–177 (SD) and 218–224 (TGGMATK).

The protein belongs to the glutamate 5-kinase family.

The protein resides in the cytoplasm. It carries out the reaction L-glutamate + ATP = L-glutamyl 5-phosphate + ADP. It functions in the pathway amino-acid biosynthesis; L-proline biosynthesis; L-glutamate 5-semialdehyde from L-glutamate: step 1/2. Functionally, catalyzes the transfer of a phosphate group to glutamate to form L-glutamate 5-phosphate. This chain is Glutamate 5-kinase, found in Clostridium acetobutylicum (strain ATCC 824 / DSM 792 / JCM 1419 / IAM 19013 / LMG 5710 / NBRC 13948 / NRRL B-527 / VKM B-1787 / 2291 / W).